A 218-amino-acid polypeptide reads, in one-letter code: Cytochrome P450 3A19 (218 aa).

Residue cysteine 153 coordinates heme.

It belongs to the cytochrome P450 family. Heme is required as a cofactor.

It localises to the endoplasmic reticulum membrane. It is found in the microsome membrane. The catalysed reaction is an organic molecule + reduced [NADPH--hemoprotein reductase] + O2 = an alcohol + oxidized [NADPH--hemoprotein reductase] + H2O + H(+). Its function is as follows. Cytochromes P450 are a group of heme-thiolate monooxygenases. In liver microsomes, this enzyme is involved in an NADPH-dependent electron transport pathway. It oxidizes a variety of structurally unrelated compounds, including steroids, fatty acids, and xenobiotics. This chain is Cytochrome P450 3A19 (CYP3A19), found in Capra hircus aegagrus (Wild goat).